The chain runs to 606 residues: Large subunit GTPase 1 homolog (606 aa).

The interval 1 to 21 is disordered; it reads MGKKNKGGAPNLGRQLIKDRF. Positions 165–395 constitute a CP-type G domain; it reads WRQLWRVVER…LCDCPGLVMP (231 aa). GTP is bound at residue 213–216; that stretch reads NKSD. Phosphoserine is present on residues S276 and S279. GTP-binding positions include 344–351 and 388–391; these read GYPNVGKS and DCPG. A disordered region spans residues 574-606; the sequence is LVAGNDPAAKPWRHVKKERREKLRKKFSHLDEH. Residues 584–600 are compositionally biased toward basic residues; the sequence is PWRHVKKERREKLRKKF.

This sequence belongs to the TRAFAC class YlqF/YawG GTPase family. LSG1 subfamily. Expressed in larval serotonergic neurons.

It localises to the cytoplasm. GTPase required for the nuclear export of the 60S ribosomal subunit. Probably acts by mediating the release of Nmd3 from the 60S ribosomal subunit after export into the cytoplasm. Regulator of body size; acts in serotonergic neurons to regulate insulin signaling and thus exerts global growth control. The chain is Large subunit GTPase 1 homolog (Ns3) from Drosophila melanogaster (Fruit fly).